A 602-amino-acid polypeptide reads, in one-letter code: Threonine--tRNA ligase (602 aa).

Residues 208–499 are catalytic; sequence DHRKLGTELK…LTEHCAGEFP (292 aa). Residues Cys-300, His-351, and His-476 each coordinate Zn(2+).

Belongs to the class-II aminoacyl-tRNA synthetase family. In terms of assembly, homodimer. It depends on Zn(2+) as a cofactor.

Its subcellular location is the cytoplasm. The enzyme catalyses tRNA(Thr) + L-threonine + ATP = L-threonyl-tRNA(Thr) + AMP + diphosphate + H(+). Its function is as follows. Catalyzes the attachment of threonine to tRNA(Thr) in a two-step reaction: L-threonine is first activated by ATP to form Thr-AMP and then transferred to the acceptor end of tRNA(Thr). Also edits incorrectly charged L-seryl-tRNA(Thr). In Campylobacter jejuni (strain RM1221), this protein is Threonine--tRNA ligase.